The sequence spans 654 residues: Chaperone protein DnaK (654 aa).

Threonine 205 is subject to Phosphothreonine; by autocatalysis. Residues 592–654 form a disordered region; sequence ELERQMQQIG…EVEILDDKKP (63 aa). Polar residues predominate over residues 608–621; sequence AGQSETQSTGPGSY. Low complexity predominate over residues 622–636; sequence QESSNQSSQHQTNNN.

This sequence belongs to the heat shock protein 70 family.

Acts as a chaperone. In Protochlamydia amoebophila (strain UWE25), this protein is Chaperone protein DnaK.